A 194-amino-acid chain; its full sequence is MYIGRFVVVGPSVAAYRVSSRSFPNRKLIERPAGLTVVPTADAEETTNPYVSYNCVRTAGGHAVVGNGSHVDPITEKVERGYPPRDALTEALLAMDYEKDDYDTPRIAGVLAPDGTAYVGIVRADAVLVRAVEEPTLVATYEKDAPEAIGFDAATAADAAREAYSAAFEHAVCAAGVSRRGVGDGYDTAVVNDP.

The protein belongs to the archaeal IMP cyclohydrolase family.

It carries out the reaction IMP + H2O = 5-formamido-1-(5-phospho-D-ribosyl)imidazole-4-carboxamide. It participates in purine metabolism; IMP biosynthesis via de novo pathway; IMP from 5-formamido-1-(5-phospho-D-ribosyl)imidazole-4-carboxamide: step 1/1. Its function is as follows. Catalyzes the cyclization of 5-formylamidoimidazole-4-carboxamide ribonucleotide to IMP. The sequence is that of IMP cyclohydrolase from Halobacterium salinarum (strain ATCC 29341 / DSM 671 / R1).